The sequence spans 98 residues: NADH-ubiquinone oxidoreductase chain 4L (98 aa).

Transmembrane regions (helical) follow at residues 2-22 (PSIFINIILAFIIALLGMLIF), 37-57 (MLSMFILSTLTILSLHLTMSF), and 61-81 (ILLLVFAACEAAVGLALLVTV).

The protein belongs to the complex I subunit 4L family. In terms of assembly, core subunit of respiratory chain NADH dehydrogenase (Complex I) which is composed of 45 different subunits.

Its subcellular location is the mitochondrion inner membrane. The catalysed reaction is a ubiquinone + NADH + 5 H(+)(in) = a ubiquinol + NAD(+) + 4 H(+)(out). Core subunit of the mitochondrial membrane respiratory chain NADH dehydrogenase (Complex I) which catalyzes electron transfer from NADH through the respiratory chain, using ubiquinone as an electron acceptor. Part of the enzyme membrane arm which is embedded in the lipid bilayer and involved in proton translocation. The polypeptide is NADH-ubiquinone oxidoreductase chain 4L (MT-ND4L) (Varecia rubra (Red ruffed lemur)).